We begin with the raw amino-acid sequence, 164 residues long: Phosphopantetheine adenylyltransferase (164 aa).

Ser-10 is a substrate binding site. ATP contacts are provided by residues 10–11 and His-18; that span reads SF. The substrate site is built by Lys-42, Thr-79, and Arg-93. ATP contacts are provided by residues 94 to 96, Glu-104, and 129 to 135; these read GLR and VRPITAS.

It belongs to the bacterial CoaD family. Homohexamer. The cofactor is Mg(2+).

Its subcellular location is the cytoplasm. It carries out the reaction (R)-4'-phosphopantetheine + ATP + H(+) = 3'-dephospho-CoA + diphosphate. The protein operates within cofactor biosynthesis; coenzyme A biosynthesis; CoA from (R)-pantothenate: step 4/5. Functionally, reversibly transfers an adenylyl group from ATP to 4'-phosphopantetheine, yielding dephospho-CoA (dPCoA) and pyrophosphate. The sequence is that of Phosphopantetheine adenylyltransferase from Bradyrhizobium sp. (strain ORS 278).